The primary structure comprises 290 residues: Probable protein phosphatase 2C 62 (290 aa).

One can recognise a PPM-type phosphatase domain in the interval 38-288 (KHGYHLVKGK…DDISCIVVKF (251 aa)). Residues Asp-75, Gly-76, Asp-240, and Asp-279 each coordinate Mn(2+).

Belongs to the PP2C family. Mg(2+) serves as cofactor. The cofactor is Mn(2+).

It catalyses the reaction O-phospho-L-seryl-[protein] + H2O = L-seryl-[protein] + phosphate. The catalysed reaction is O-phospho-L-threonyl-[protein] + H2O = L-threonyl-[protein] + phosphate. The sequence is that of Probable protein phosphatase 2C 62 from Oryza sativa subsp. japonica (Rice).